A 434-amino-acid polypeptide reads, in one-letter code: Enolase (434 aa).

Residue Gln165 participates in (2R)-2-phosphoglycerate binding. The active-site Proton donor is Glu207. The Mg(2+) site is built by Asp244, Glu291, and Asp318. (2R)-2-phosphoglycerate is bound by residues Lys343, Arg372, Ser373, and Lys394. Residue Lys343 is the Proton acceptor of the active site.

It belongs to the enolase family. The cofactor is Mg(2+).

Its subcellular location is the cytoplasm. The protein localises to the secreted. It is found in the cell surface. It catalyses the reaction (2R)-2-phosphoglycerate = phosphoenolpyruvate + H2O. It functions in the pathway carbohydrate degradation; glycolysis; pyruvate from D-glyceraldehyde 3-phosphate: step 4/5. Catalyzes the reversible conversion of 2-phosphoglycerate (2-PG) into phosphoenolpyruvate (PEP). It is essential for the degradation of carbohydrates via glycolysis. The sequence is that of Enolase from Staphylococcus epidermidis (strain ATCC 35984 / DSM 28319 / BCRC 17069 / CCUG 31568 / BM 3577 / RP62A).